A 370-amino-acid chain; its full sequence is MRVIFSGGGTGGHIYPIMALIERLKERKLVTNDEILFVGTDRGLESKIVPAAGVPFRTLKIKGFDRKHPLKNFETIELFIKATKEAKQIIKDFKPDVVVGTGGYVSGAIVYEAAKMHIPTIIHESNSVVGLANKFLAHYVDKICYTFDDAAKQFSEKKKLVKTGNPRSQQVLGLNKDNVDLAKKWGLNPNMPTVLIFGGSRGALAINQIVEKSLPELETKPYQVIWATGQLYYGDVKKKLAGKEISSNVKIVPYIDNMPGLLPQMTCVVARSGATSLAEFTALGVPVILIPSPNVTHNHQMKNAMDMEKAGAALVIAEDDLNPNNFVSSIDHILLDTNYAKQMSEASRRLGVPDASDQVISVMEGLIKNK.

UDP-N-acetyl-alpha-D-glucosamine is bound by residues 10-12, asparagine 126, serine 200, isoleucine 255, and glutamine 300; that span reads TGG.

Belongs to the glycosyltransferase 28 family. MurG subfamily.

It is found in the cell membrane. It carries out the reaction Mur2Ac(oyl-L-Ala-gamma-D-Glu-L-Lys-D-Ala-D-Ala)-di-trans,octa-cis-undecaprenyl diphosphate + UDP-N-acetyl-alpha-D-glucosamine = beta-D-GlcNAc-(1-&gt;4)-Mur2Ac(oyl-L-Ala-gamma-D-Glu-L-Lys-D-Ala-D-Ala)-di-trans,octa-cis-undecaprenyl diphosphate + UDP + H(+). Its pathway is cell wall biogenesis; peptidoglycan biosynthesis. Cell wall formation. Catalyzes the transfer of a GlcNAc subunit on undecaprenyl-pyrophosphoryl-MurNAc-pentapeptide (lipid intermediate I) to form undecaprenyl-pyrophosphoryl-MurNAc-(pentapeptide)GlcNAc (lipid intermediate II). The protein is UDP-N-acetylglucosamine--N-acetylmuramyl-(pentapeptide) pyrophosphoryl-undecaprenol N-acetylglucosamine transferase of Lactobacillus gasseri (strain ATCC 33323 / DSM 20243 / BCRC 14619 / CIP 102991 / JCM 1131 / KCTC 3163 / NCIMB 11718 / NCTC 13722 / AM63).